Reading from the N-terminus, the 227-residue chain is ATP synthase F(0) complex subunit a (227 aa).

The next 6 helical transmembrane spans lie at 14–34, 69–89, 98–118, 132–152, 180–200, and 202–222; these read LFGIPLIALALLLPWTLFPAP, WGPYILLVMVFLISINMLGLL, QLSVNMALAVPVWLMTVIIGL, EGTPVPLIPALILIETISLFI, FVLLPLMPTVAILTTILLFLL, and LLEVAVAMIQAYVFVLLLSLY.

It belongs to the ATPase A chain family. As to quaternary structure, component of the ATP synthase complex composed at least of ATP5F1A/subunit alpha, ATP5F1B/subunit beta, ATP5MC1/subunit c (homooctomer), MT-ATP6/subunit a, MT-ATP8/subunit 8, ATP5ME/subunit e, ATP5MF/subunit f, ATP5MG/subunit g, ATP5MK/subunit k, ATP5MJ/subunit j, ATP5F1C/subunit gamma, ATP5F1D/subunit delta, ATP5F1E/subunit epsilon, ATP5PF/subunit F6, ATP5PB/subunit b, ATP5PD/subunit d, ATP5PO/subunit OSCP. ATP synthase complex consists of a soluble F(1) head domain (subunits alpha(3) and beta(3)) - the catalytic core - and a membrane F(0) domain - the membrane proton channel (subunits c, a, 8, e, f, g, k and j). These two domains are linked by a central stalk (subunits gamma, delta, and epsilon) rotating inside the F1 region and a stationary peripheral stalk (subunits F6, b, d, and OSCP). Interacts with DNAJC30; interaction is direct.

The protein resides in the mitochondrion inner membrane. It catalyses the reaction H(+)(in) = H(+)(out). Its function is as follows. Subunit a, of the mitochondrial membrane ATP synthase complex (F(1)F(0) ATP synthase or Complex V) that produces ATP from ADP in the presence of a proton gradient across the membrane which is generated by electron transport complexes of the respiratory chain. ATP synthase complex consist of a soluble F(1) head domain - the catalytic core - and a membrane F(1) domain - the membrane proton channel. These two domains are linked by a central stalk rotating inside the F(1) region and a stationary peripheral stalk. During catalysis, ATP synthesis in the catalytic domain of F(1) is coupled via a rotary mechanism of the central stalk subunits to proton translocation. With the subunit c (ATP5MC1), forms the proton-conducting channel in the F(0) domain, that contains two crucial half-channels (inlet and outlet) that facilitate proton movement from the mitochondrial intermembrane space (IMS) into the matrix. Protons are taken up via the inlet half-channel and released through the outlet half-channel, following a Grotthuss mechanism. This is ATP synthase F(0) complex subunit a from Tetraodon nigroviridis (Spotted green pufferfish).